Reading from the N-terminus, the 629-residue chain is Natural resistance-associated macrophage protein 2 homolog (629 aa).

Residues M1–K151 lie on the Cytoplasmic side of the membrane. Positions N50 to I119 are disordered. Residues Q62–Q85 show a composition bias toward low complexity. Residues D96 to N105 are compositionally biased toward basic and acidic residues. Low complexity predominate over residues I106 to S118. A helical membrane pass occupies residues S152–T172. Residues D173–Y182 are Extracellular-facing. A helical membrane pass occupies residues Q183–I203. Topologically, residues K204–T224 are cytoplasmic. A helical transmembrane segment spans residues V225–V245. At I246–N253 the chain is on the extracellular side. Residues I254 to F274 traverse the membrane as a helical segment. Over L275–E286 the chain is Cytoplasmic. Residues L287–S307 traverse the membrane as a helical segment. The Extracellular segment spans residues K308–S326. A helical transmembrane segment spans residues V327–G347. The Cytoplasmic segment spans residues S348 to V376. A helical transmembrane segment spans residues L377 to F397. Topologically, residues W398 to K421 are extracellular. Residues L422–G442 form a helical membrane-spanning segment. The Cytoplasmic portion of the chain corresponds to T443–R468. The helical transmembrane segment at L469–T489 threads the bilayer. Over L490–L491 the chain is Extracellular. A helical membrane pass occupies residues I492–F512. Residues T513–S527 lie on the Cytoplasmic side of the membrane. Residues I528 to F548 traverse the membrane as a helical segment. Over Q549–L565 the chain is Extracellular. The N-linked (GlcNAc...) asparagine glycan is linked to N557. Residues T566–I586 form a helical membrane-spanning segment. Over S587–Q629 the chain is Cytoplasmic.

This sequence belongs to the NRAMP family.

Its subcellular location is the cell membrane. Divalent transition metal (iron and manganese) transporter. This is Natural resistance-associated macrophage protein 2 homolog (nramp2) from Dictyostelium discoideum (Social amoeba).